The following is a 64-amino-acid chain: U-scoloptoxin(14)-Er1a (64 aa).

An N-terminal signal peptide occupies residues 1–23 (MRPSFPLLLIMLLVCTAHHMVSG).

The protein belongs to the scoloptoxin-14 family. Post-translationally, contains 4 disulfide bonds. In terms of tissue distribution, expressed by the venom gland.

The protein localises to the secreted. This chain is U-scoloptoxin(14)-Er1a, found in Ethmostigmus rubripes (Giant centipede).